A 1013-amino-acid chain; its full sequence is MDLFVYQWFCDGSQEIRAYAVDSDSSTVCVRVTGFRPGFYVETASCQAVTRALQDFRDVSAEKRVRDHLYATRGSSVPFVWVTFRCWFDARKASDVLVKAGFACHQCRAQPVLQLTSLRDLPTCGWIRLGKGAVQVKREKYSRCKREFIVQWEQVERGPDVPQPEVTVVALDLEVNSEVENAMPKDRPGDEVFMAGAIILRPGKKPKRVLLSLEADDYPEAEVLAERGYAVQQYPNERSLISGLCDMLSSVKPQVVTGYNVLGFDIDYLLKRCVRLGMEEELCLTGMAAERPAKERTISWSSSAFGAQKYSYLDWEGVVAVDLLPIIKRDYKFDSYRLDFVTETLLGSNKDPVTAADIFRAYATRKMDVVGEYCVKDVQLCVDLMEKLQVWVGLTEMAKVCRVNAFTLFTQGQQIRIYSQVYCHCEKNGYVVTDPADGKRVPWGQDPPVSDEPDEDYIGAHVVEPSPGIYDNVVPLDFSSLYPSIMIAKNVCYSTRVDPGTPGSETFTWEDHLNCVHDPRKVEYERLSSELWDLDSEARELRRERDAIPRKRVDDRRLVVDTLNTVLDAQRMLRTTRAALKNQLGTKTVCACRLLAFLEPATKKGVMPTILTDLLDGRKRAKKAKAEAKDSITKITMDKRQLAYKVSANSMYGAMGVKRGYLPFQDGAMTVTYFGRQCIEKAASIIGSEHGGQLVYGDTDSNYVTFADAKTPAELWDKAVAVAKAVSSVFPPPISLEFEQVIYTKFLILGKKRYIYLSCDRDGNSSGKMGFRGVLMARRDNSGLARKAYSITAQALLEDRDPWADLTPLMKDMYTKNCSLRDFVITKQVGSWCRECAFIEQGADSIVAVGDYKIRDLEKAKAETRKITGTDGGPEYMAVLYKLVMAQLPGHVQLANRMIGRGETVADGTRLEYVVLRPSYDGKKRRFRGQGLSERLETSDYYKRFAEFLELDTEHYVKTLVNPLDQLLTTAGRPEDEFKAFYGYRVNYRKVVEDIKTLRACPEMVKIVSFKKK.

It belongs to the DNA polymerase type-B family.

It catalyses the reaction DNA(n) + a 2'-deoxyribonucleoside 5'-triphosphate = DNA(n+1) + diphosphate. Functionally, DNA-directed DNA polymerase involved in viral DNA replication. The protein is Putative DNA polymerase 060R of Dryophytes versicolor (chameleon treefrog).